A 170-amino-acid polypeptide reads, in one-letter code: Adenine phosphoribosyltransferase (170 aa).

It belongs to the purine/pyrimidine phosphoribosyltransferase family. As to quaternary structure, homodimer.

It is found in the cytoplasm. The enzyme catalyses AMP + diphosphate = 5-phospho-alpha-D-ribose 1-diphosphate + adenine. It participates in purine metabolism; AMP biosynthesis via salvage pathway; AMP from adenine: step 1/1. Its function is as follows. Catalyzes a salvage reaction resulting in the formation of AMP, that is energically less costly than de novo synthesis. This Bacillus pumilus (strain SAFR-032) protein is Adenine phosphoribosyltransferase.